Here is a 179-residue protein sequence, read N- to C-terminus: Large ribosomal subunit protein uL6 (179 aa).

Belongs to the universal ribosomal protein uL6 family. In terms of assembly, part of the 50S ribosomal subunit.

Functionally, this protein binds to the 23S rRNA, and is important in its secondary structure. It is located near the subunit interface in the base of the L7/L12 stalk, and near the tRNA binding site of the peptidyltransferase center. The sequence is that of Large ribosomal subunit protein uL6 from Mycolicibacterium gilvum (strain PYR-GCK) (Mycobacterium gilvum (strain PYR-GCK)).